The following is an 88-amino-acid chain: Cell division topological specificity factor (88 aa).

Belongs to the MinE family.

In terms of biological role, prevents the cell division inhibition by proteins MinC and MinD at internal division sites while permitting inhibition at polar sites. This ensures cell division at the proper site by restricting the formation of a division septum at the midpoint of the long axis of the cell. In Aromatoleum aromaticum (strain DSM 19018 / LMG 30748 / EbN1) (Azoarcus sp. (strain EbN1)), this protein is Cell division topological specificity factor.